Reading from the N-terminus, the 115-residue chain is Pancreatic progenitor cell differentiation and proliferation factor B (115 aa).

The segment at 21 to 48 (IGSTSSSSSCGSSEYSGEVIPHHPGLPK) is disordered. The span at 22 to 37 (GSTSSSSSCGSSEYSG) shows a compositional bias: low complexity.

This sequence belongs to the PPDPF family.

In terms of biological role, probable regulator of exocrine pancreas development. In Danio rerio (Zebrafish), this protein is Pancreatic progenitor cell differentiation and proliferation factor B (ppdpfb).